The following is a 608-amino-acid chain: Auxin response factor 3 (608 aa).

Residues 1-40 (MGGLIDLNVMETEEDETQTQTPSSASGSVSPTSSSSASVS) form a disordered region. A compositionally biased stretch (low complexity) spans 18 to 40 (QTQTPSSASGSVSPTSSSSASVS). Residues 159-261 (FCKTLTASDT…KLRLGVRRAS (103 aa)) constitute a DNA-binding region (TF-B3).

The protein belongs to the ARF family. Homo and heterodimers. In terms of tissue distribution, expressed in the whole plant.

It localises to the nucleus. In terms of biological role, auxin response factors (ARFs) are transcriptional factors that bind specifically to the DNA sequence 5'-TGTCTC-3' found in the auxin-responsive promoter elements (AuxREs). Could act as transcriptional activator or repressor. Formation of heterodimers with Aux/IAA proteins may alter their ability to modulate early auxin response genes expression. Involved in the establishment or elaboration of tissue patterning during gynoecial development. The sequence is that of Auxin response factor 3 (ARF3) from Arabidopsis thaliana (Mouse-ear cress).